The chain runs to 286 residues: Tryptophan 2,3-dioxygenase (286 aa).

Substrate contacts are provided by residues 55 to 59, Tyr117, and Arg121; that span reads FIIIH. His244 provides a ligand contact to heme. Thr258 contributes to the substrate binding site.

The protein belongs to the tryptophan 2,3-dioxygenase family. In terms of assembly, homotetramer. Heme serves as cofactor.

The catalysed reaction is L-tryptophan + O2 = N-formyl-L-kynurenine. It functions in the pathway amino-acid degradation; L-tryptophan degradation via kynurenine pathway; L-kynurenine from L-tryptophan: step 1/2. Heme-dependent dioxygenase that catalyzes the oxidative cleavage of the L-tryptophan (L-Trp) pyrrole ring and converts L-tryptophan to N-formyl-L-kynurenine. Catalyzes the oxidative cleavage of the indole moiety. In Shewanella woodyi (strain ATCC 51908 / MS32), this protein is Tryptophan 2,3-dioxygenase.